We begin with the raw amino-acid sequence, 182 residues long: ADP-ribosylation factor 1 (182 aa).

The N-myristoyl glycine moiety is linked to residue Gly-2. Residues 3 to 16 (NVFANLFKGLFGKK) are important for the stable binding to the membranes. GTP-binding positions include 24–32 (GLDAAGKTT), 126–129 (NKQD), and Ala-160.

It belongs to the small GTPase superfamily. Arf family.

It is found in the golgi apparatus membrane. Its subcellular location is the cytoplasm. The protein resides in the cytosol. The enzyme catalyses GTP + H2O = GDP + phosphate + H(+). With respect to regulation, alternates between an inactive GDP-bound form and an active GTP-bound form. Activated by a guanine nucleotide-exchange factor (GEF) and inactivated by GTPase-activating protein (GAP). Functionally, small GTPase involved in protein trafficking between different compartments. Modulates vesicle budding and uncoating within the Golgi complex. In its GTP-bound form, triggers the recruitment of coatomer proteins to the Golgi membrane. The hydrolysis of ARF1-bound GTP, which is mediated by ARFGAPs proteins, is required for dissociation of coat proteins from Golgi membranes and vesicles. Has a role in eye development. Required for cleavage furrow ingression in embryonic cells. This chain is ADP-ribosylation factor 1, found in Drosophila melanogaster (Fruit fly).